Consider the following 292-residue polypeptide: Ribosomal protein L11 methyltransferase (292 aa).

Positions 144, 165, 187, and 229 each coordinate S-adenosyl-L-methionine.

This sequence belongs to the methyltransferase superfamily. PrmA family.

Its subcellular location is the cytoplasm. It carries out the reaction L-lysyl-[protein] + 3 S-adenosyl-L-methionine = N(6),N(6),N(6)-trimethyl-L-lysyl-[protein] + 3 S-adenosyl-L-homocysteine + 3 H(+). Functionally, methylates ribosomal protein L11. The chain is Ribosomal protein L11 methyltransferase from Ectopseudomonas mendocina (strain ymp) (Pseudomonas mendocina).